A 124-amino-acid polypeptide reads, in one-letter code: Large ribosomal subunit protein bL12 (124 aa).

It belongs to the bacterial ribosomal protein bL12 family. Homodimer. Part of the ribosomal stalk of the 50S ribosomal subunit. Forms a multimeric L10(L12)X complex, where L10 forms an elongated spine to which 2 to 4 L12 dimers bind in a sequential fashion. Binds GTP-bound translation factors.

Forms part of the ribosomal stalk which helps the ribosome interact with GTP-bound translation factors. Is thus essential for accurate translation. In Burkholderia mallei (strain NCTC 10247), this protein is Large ribosomal subunit protein bL12.